We begin with the raw amino-acid sequence, 583 residues long: Putative glutaminase 3 (583 aa).

Residues Met1 to Thr29 form a disordered region. Positions 216, 265, 311, 318, 344, 396, and 414 each coordinate substrate. ANK repeat units follow at residues Asp482–Tyr514, Asp515–Arg548, and Tyr549–Gln581.

This sequence belongs to the glutaminase family.

It catalyses the reaction L-glutamine + H2O = L-glutamate + NH4(+). This is Putative glutaminase 3 (glna-3) from Caenorhabditis elegans.